Consider the following 247-residue polypeptide: 14-3-3 protein zeta (247 aa).

Belongs to the 14-3-3 family. As to quaternary structure, homodimer.

Its subcellular location is the cytoplasm. Adapter protein implicated in the regulation of a large spectrum of both general and specialized signaling pathways. Binds to a large number of partners, usually by recognition of a phosphoserine or phosphothreonine motif. Binding generally results in the modulation of the activity of the binding partner. The polypeptide is 14-3-3 protein zeta (14-3-3zeta) (Bombyx mori (Silk moth)).